A 252-amino-acid polypeptide reads, in one-letter code: Mitochondrial intermembrane space import and assembly protein 40 (252 aa).

Residues 1 to 31 constitute a mitochondrion transit peptide; the sequence is MYRTISRSSSGLIRQSTARLTRQLSTTRTTP. The Mitochondrial matrix portion of the chain corresponds to 32-37; sequence SQYNSK. Residues 38–54 form a helical; Signal-anchor for type II membrane protein membrane-spanning segment; it reads LLLGVLGTGALAFGYFS. Over 55-252 the chain is Mitochondrial intermembrane; sequence QQSSLIQNAS…DKVKPNTKSD (198 aa). Residues 90–123 are compositionally biased toward basic and acidic residues; it reads RQEKVIKENEQKTKKAEDAKTSSESKANVADKKS. Residues 90–143 form a disordered region; sequence RQEKVIKENEQKTKKAEDAKTSSESKANVADKKSNSQPEGEPEGEGKQEAAFNP. Intrachain disulfides connect C152-C154, C163-C196, and C173-C186. One can recognise a CHCH domain in the interval 160 to 204; it reads HGPCGEEFKEAFSCFVFSETEPKGIDCIKKFENMRSCFKRYPEHY. 2 consecutive short sequence motifs (cx9C motif) follow at residues 163 to 173 and 186 to 196; these read CGEEFKEAFSC and CIKKFENMRSC. The disordered stretch occupies residues 230–252; sequence EPAIEQIEQGIKEDKVKPNTKSD. A compositionally biased stretch (basic and acidic residues) spans 239-252; it reads GIKEDKVKPNTKSD.

Monomer. Cu(2+) serves as cofactor. It depends on Zn(2+) as a cofactor.

The protein resides in the mitochondrion inner membrane. Functionally, required for the import and folding of small cysteine-containing proteins (small Tim) in the mitochondrial intermembrane space (IMS). Forms a redox cycle with ERV1 that involves a disulfide relay system. Precursor proteins to be imported into the IMS are translocated in their reduced form into the mitochondria. The oxidized form of MIA40 forms a transient intermolecular disulfide bridge with the reduced precursor protein, resulting in oxidation of the precursor protein that now contains an intramolecular disulfide bond and is able to undergo folding in the IMS. The sequence is that of Mitochondrial intermembrane space import and assembly protein 40 (MIA40) from Candida albicans (strain SC5314 / ATCC MYA-2876) (Yeast).